Here is a 150-residue protein sequence, read N- to C-terminus: Large ribosomal subunit protein uL15 (150 aa).

Positions 1–49 are disordered; that stretch reads MELHQLKSVSKSRNHKSKVVGRGHGSGLGKTSSRGQKGQKARKSGLTRL. The span at 10–21 shows a compositional bias: basic residues; the sequence is SKSRNHKSKVVG.

This sequence belongs to the universal ribosomal protein uL15 family. In terms of assembly, part of the 50S ribosomal subunit.

Binds to the 23S rRNA. This Mycoplasma genitalium (strain ATCC 33530 / DSM 19775 / NCTC 10195 / G37) (Mycoplasmoides genitalium) protein is Large ribosomal subunit protein uL15.